An 869-amino-acid chain; its full sequence is DNA mismatch repair protein MutS (869 aa).

ATP is bound at residue 618-625 (GPNMGGKS).

It belongs to the DNA mismatch repair MutS family.

Its function is as follows. This protein is involved in the repair of mismatches in DNA. It is possible that it carries out the mismatch recognition step. This protein has a weak ATPase activity. This chain is DNA mismatch repair protein MutS, found in Zymomonas mobilis subsp. mobilis (strain ATCC 31821 / ZM4 / CP4).